We begin with the raw amino-acid sequence, 413 residues long: MKFLILNAGSSSQKSCLYELTGDRLPETIPEPLWEAFIDWTVLANQGRLTVETAGQKQVIILETGDRQQGIARMLDTLVTGDDAVLKSLAEIDLVGHRVVHGGTDHAEATLITPEVQQAIADLIPLAPAHNPAHLEGIEAISALLVLGEVPQIAVFDTAFHRTIPTPAAEYPIPQAWTNLGIRRYGFHGTSHKYCAQKTAEILGKPLADLKLITCHIGNGASLTAIKNGVSIDTTMGFTPLEGLMMGARSGSIDPAILLFLQETQGLTPAEINTTLNKKSGLLGVSGLSADLRTILQAKAEGNEQAQLAYVMYIHRFRSCLGQMIASLEGLDTLVFTAGVGENAATVRADVCQAFEFLGLKLDPELNNRSPRDTVISHSDSLVTVLIVHTEEDWAIAQDCWHWWHSQGQRKQS.

Residue asparagine 7 participates in Mg(2+) binding. Lysine 14 contacts ATP. Arginine 98 serves as a coordination point for substrate. Aspartate 157 (proton donor/acceptor) is an active-site residue. ATP contacts are provided by residues 216 to 220 (HIGNG), 291 to 293 (DLR), and 339 to 343 (GVGEN). A Mg(2+)-binding site is contributed by glutamate 392.

Belongs to the acetokinase family. In terms of assembly, homodimer. The cofactor is Mg(2+). Mn(2+) is required as a cofactor.

Its subcellular location is the cytoplasm. The catalysed reaction is acetate + ATP = acetyl phosphate + ADP. The protein operates within metabolic intermediate biosynthesis; acetyl-CoA biosynthesis; acetyl-CoA from acetate: step 1/2. Catalyzes the formation of acetyl phosphate from acetate and ATP. Can also catalyze the reverse reaction. In Synechocystis sp. (strain ATCC 27184 / PCC 6803 / Kazusa), this protein is Acetate kinase.